The primary structure comprises 365 residues: Ribosomal RNA large subunit methyltransferase M (365 aa).

S-adenosyl-L-methionine-binding positions include Ser-187, 220-223 (CPGG), Asp-239, Asp-259, and Asp-276. Lys-305 (proton acceptor) is an active-site residue.

It belongs to the class I-like SAM-binding methyltransferase superfamily. RNA methyltransferase RlmE family. RlmM subfamily. In terms of assembly, monomer.

It is found in the cytoplasm. The enzyme catalyses cytidine(2498) in 23S rRNA + S-adenosyl-L-methionine = 2'-O-methylcytidine(2498) in 23S rRNA + S-adenosyl-L-homocysteine + H(+). Catalyzes the 2'-O-methylation at nucleotide C2498 in 23S rRNA. The protein is Ribosomal RNA large subunit methyltransferase M of Psychromonas ingrahamii (strain DSM 17664 / CCUG 51855 / 37).